Reading from the N-terminus, the 548-residue chain is Folylpolyglutamate synthase (548 aa).

130–133 (GKGS) serves as a coordination point for ATP. Mg(2+)-binding residues include Ser157, Glu234, and His262. ATP contacts are provided by Arg382 and Asp396.

It belongs to the folylpolyglutamate synthase family. It depends on a monovalent cation as a cofactor.

It localises to the mitochondrion inner membrane. The protein resides in the mitochondrion matrix. Its subcellular location is the cytoplasm. It catalyses the reaction (6S)-5,6,7,8-tetrahydrofolyl-(gamma-L-Glu)(n) + L-glutamate + ATP = (6S)-5,6,7,8-tetrahydrofolyl-(gamma-L-Glu)(n+1) + ADP + phosphate + H(+). Its pathway is cofactor biosynthesis; tetrahydrofolylpolyglutamate biosynthesis. Catalyzes conversion of folates to polyglutamate derivatives allowing concentration of folate compounds in the cell and the intracellular retention of these cofactors, which are important substrates for most of the folate-dependent enzymes that are involved in one-carbon transfer reactions involved in purine, pyrimidine and amino acid synthesis. Required for methionine synthesis and maintenance of intact mitochondrial DNA. Involved in telomere maintenance. The sequence is that of Folylpolyglutamate synthase from Saccharomyces cerevisiae (strain FostersO) (Baker's yeast).